The following is a 155-amino-acid chain: 6,7-dimethyl-8-ribityllumazine synthase (155 aa).

5-amino-6-(D-ribitylamino)uracil contacts are provided by residues F23, 57-59, and 81-83; these read AFE and AVI. A (2S)-2-hydroxy-3-oxobutyl phosphate-binding site is contributed by 86-87; that stretch reads ST. The active-site Proton donor is the H89. F114 contributes to the 5-amino-6-(D-ribitylamino)uracil binding site. Residue R128 coordinates (2S)-2-hydroxy-3-oxobutyl phosphate.

Belongs to the DMRL synthase family.

The enzyme catalyses (2S)-2-hydroxy-3-oxobutyl phosphate + 5-amino-6-(D-ribitylamino)uracil = 6,7-dimethyl-8-(1-D-ribityl)lumazine + phosphate + 2 H2O + H(+). It participates in cofactor biosynthesis; riboflavin biosynthesis; riboflavin from 2-hydroxy-3-oxobutyl phosphate and 5-amino-6-(D-ribitylamino)uracil: step 1/2. In terms of biological role, catalyzes the formation of 6,7-dimethyl-8-ribityllumazine by condensation of 5-amino-6-(D-ribitylamino)uracil with 3,4-dihydroxy-2-butanone 4-phosphate. This is the penultimate step in the biosynthesis of riboflavin. This is 6,7-dimethyl-8-ribityllumazine synthase from Geobacter metallireducens (strain ATCC 53774 / DSM 7210 / GS-15).